The primary structure comprises 367 residues: Cytochrome P450 119 (367 aa).

Heme contacts are provided by His-76, Arg-80, Thr-257, Arg-259, His-315, and Cys-317.

Belongs to the cytochrome P450 family. The cofactor is heme.

Its subcellular location is the cytoplasm. The protein is Cytochrome P450 119 (cyp119) of Sulfurisphaera tokodaii (strain DSM 16993 / JCM 10545 / NBRC 100140 / 7) (Sulfolobus tokodaii).